A 374-amino-acid chain; its full sequence is Glutamine synthetase (374 aa).

The tract at residues 2 to 25 (TTSASSHLNKGIKQVYMSLPQGEK) is required for glutamine-induced ubiquitination by CRL4(CRBN) and proteasomal degradation. N6-acetyllysine is present on residues K11 and K14. Residues 24–106 (EKVQAMYIWI…VLCESFQVQF (83 aa)) form the GS beta-grasp domain. The GS catalytic domain occupies 114–374 (LRHTCKRIMD…TGDEPFQYKN (261 aa)). E135 is a binding site for ATP. Mn(2+) contacts are provided by E135, E137, E197, and E204. 204 to 209 (EFQIGP) serves as a coordination point for ATP. 247–248 (NW) is a binding site for L-glutamate. H254 is a binding site for Mn(2+). Residues 256–258 (NFS), R320, and R325 each bind ATP. An L-glutamate-binding site is contributed by R320. Residue 337–339 (YFE) coordinates ADP. E339 lines the Mn(2+) pocket. R341 provides a ligand contact to L-glutamate. S344 carries the post-translational modification Phosphoserine.

Belongs to the glutamine synthetase family. As to quaternary structure, decamer; composed of two pentamers. Interacts with PALMD. Interacts with RHOJ. Interacts with BEST2; this interaction tethers a fraction of GLUL to the membrane, causing a decrease of cytosolic glutamine synthase (GS) activity and inhibits the chloride channel activity of BEST2 by affecting the gating at the aperture in the absence of intracellular glutamate. Mg(2+) is required as a cofactor. It depends on Mn(2+) as a cofactor. Palmitoylated; undergoes autopalmitoylation. Post-translationally, acetylated by EP300/p300; acetylation is stimulated by increased glutamine levels and promotes ubiquitin-mediated proteasomal degradation. In terms of processing, ubiquitinated by ZNRF1. Ubiquitinated by the DCX (DDB1-CUL4-X-box) E3 ubiquitin-protein ligase complex called CRL4(CRBN), leading to proteasomal degradation.

The protein localises to the cytoplasm. Its subcellular location is the cytosol. It is found in the microsome. The protein resides in the mitochondrion. It localises to the cell membrane. The enzyme catalyses L-glutamate + NH4(+) + ATP = L-glutamine + ADP + phosphate + H(+). It carries out the reaction L-cysteinyl-[protein] + hexadecanoyl-CoA = S-hexadecanoyl-L-cysteinyl-[protein] + CoA. Glutamine synthetase activity is inhibited by methionine sulfoximine (MSO). Glutamine synthetase that catalyzes the ATP-dependent conversion of glutamate and ammonia to glutamine. Its role depends on tissue localization: in the brain, it regulates the levels of toxic ammonia and converts neurotoxic glutamate to harmless glutamine, whereas in the liver, it is one of the enzymes responsible for the removal of ammonia. Plays a key role in ammonium detoxification during erythropoiesis: the glutamine synthetase activity is required to remove ammonium generated by porphobilinogen deaminase (HMBS) during heme biosynthesis to prevent ammonium accumulation and oxidative stress. Essential for proliferation of fetal skin fibroblasts. Independently of its glutamine synthetase activity, required for endothelial cell migration during vascular development. Involved in angiogenesis by regulating membrane localization and activation of the GTPase RHOJ, possibly by promoting RHOJ palmitoylation. May act as a palmitoyltransferase for RHOJ: able to autopalmitoylate and then transfer the palmitoyl group to RHOJ. Plays a role in ribosomal 40S subunit biogenesis. Through the interaction with BEST2, inhibits BEST2 channel activity by affecting the gating at the aperture in the absence of intracellular L-glutamate, but sensitizes BEST2 to intracellular L-glutamate, which promotes the opening of BEST2 and thus relieves its inhibitory effect on BEST2. This Macaca fascicularis (Crab-eating macaque) protein is Glutamine synthetase.